The following is a 239-amino-acid chain: Ubiquinone biosynthesis O-methyltransferase (239 aa).

Residues Arg-45, Gly-64, Asp-85, and Met-129 each contribute to the S-adenosyl-L-methionine site.

This sequence belongs to the methyltransferase superfamily. UbiG/COQ3 family.

It carries out the reaction a 3-demethylubiquinol + S-adenosyl-L-methionine = a ubiquinol + S-adenosyl-L-homocysteine + H(+). The catalysed reaction is a 3-(all-trans-polyprenyl)benzene-1,2-diol + S-adenosyl-L-methionine = a 2-methoxy-6-(all-trans-polyprenyl)phenol + S-adenosyl-L-homocysteine + H(+). It functions in the pathway cofactor biosynthesis; ubiquinone biosynthesis. In terms of biological role, O-methyltransferase that catalyzes the 2 O-methylation steps in the ubiquinone biosynthetic pathway. This is Ubiquinone biosynthesis O-methyltransferase from Nitrosospira multiformis (strain ATCC 25196 / NCIMB 11849 / C 71).